Here is a 240-residue protein sequence, read N- to C-terminus: Dihydromonapterin reductase (240 aa).

Residue Tyr152 is the Proton acceptor of the active site.

This sequence belongs to the short-chain dehydrogenases/reductases (SDR) family. FolM subfamily.

It carries out the reaction (6S)-5,6,7,8-tetrahydrofolate + NADP(+) = 7,8-dihydrofolate + NADPH + H(+). The enzyme catalyses 7,8-dihydromonapterin + NADPH + H(+) = 5,6,7,8-tetrahydromonapterin + NADP(+). Catalyzes the reduction of dihydromonapterin to tetrahydromonapterin. Also has lower activity with dihydrofolate. This Escherichia coli O1:K1 / APEC protein is Dihydromonapterin reductase (folM).